A 203-amino-acid chain; its full sequence is Holliday junction branch migration complex subunit RuvA (203 aa).

Residues 1–64 (MIGRLRGIVL…EDAQLLFGFN (64 aa)) are domain I. The tract at residues 65–142 (NKQERTLFRE…KGLHGDLFTP (78 aa)) is domain II. The tract at residues 143–154 (AADLVLTSPASP) is flexible linker. A domain III region spans residues 155 to 203 (AVDDAEAEAVAALVSLGYKPQEASRMVSKVAQADASSETLIREALRAAL).

The protein belongs to the RuvA family. As to quaternary structure, homotetramer. Forms an RuvA(8)-RuvB(12)-Holliday junction (HJ) complex. HJ DNA is sandwiched between 2 RuvA tetramers; dsDNA enters through RuvA and exits via RuvB. An RuvB hexamer assembles on each DNA strand where it exits the tetramer. Each RuvB hexamer is contacted by two RuvA subunits (via domain III) on 2 adjacent RuvB subunits; this complex drives branch migration. In the full resolvosome a probable DNA-RuvA(4)-RuvB(12)-RuvC(2) complex forms which resolves the HJ.

It is found in the cytoplasm. Functionally, the RuvA-RuvB-RuvC complex processes Holliday junction (HJ) DNA during genetic recombination and DNA repair, while the RuvA-RuvB complex plays an important role in the rescue of blocked DNA replication forks via replication fork reversal (RFR). RuvA specifically binds to HJ cruciform DNA, conferring on it an open structure. The RuvB hexamer acts as an ATP-dependent pump, pulling dsDNA into and through the RuvAB complex. HJ branch migration allows RuvC to scan DNA until it finds its consensus sequence, where it cleaves and resolves the cruciform DNA. This is Holliday junction branch migration complex subunit RuvA from Cronobacter sakazakii (strain ATCC BAA-894) (Enterobacter sakazakii).